The chain runs to 414 residues: Serine hydroxymethyltransferase (414 aa).

(6S)-5,6,7,8-tetrahydrofolate contacts are provided by residues leucine 116 and glycine 120 to leucine 122. Lysine 224 carries the N6-(pyridoxal phosphate)lysine modification. Serine 348–phenylalanine 350 lines the (6S)-5,6,7,8-tetrahydrofolate pocket.

The protein belongs to the SHMT family. In terms of assembly, homodimer. Pyridoxal 5'-phosphate serves as cofactor.

The protein localises to the cytoplasm. The enzyme catalyses (6R)-5,10-methylene-5,6,7,8-tetrahydrofolate + glycine + H2O = (6S)-5,6,7,8-tetrahydrofolate + L-serine. Its pathway is one-carbon metabolism; tetrahydrofolate interconversion. It functions in the pathway amino-acid biosynthesis; glycine biosynthesis; glycine from L-serine: step 1/1. Its function is as follows. Catalyzes the reversible interconversion of serine and glycine with tetrahydrofolate (THF) serving as the one-carbon carrier. This reaction serves as the major source of one-carbon groups required for the biosynthesis of purines, thymidylate, methionine, and other important biomolecules. Also exhibits THF-independent aldolase activity toward beta-hydroxyamino acids, producing glycine and aldehydes, via a retro-aldol mechanism. In Campylobacter jejuni subsp. doylei (strain ATCC BAA-1458 / RM4099 / 269.97), this protein is Serine hydroxymethyltransferase.